A 281-amino-acid polypeptide reads, in one-letter code: Pantothenate synthetase (281 aa).

30–37 is a binding site for ATP; the sequence is MGNLHQGH. Residue His-37 is the Proton donor of the active site. (R)-pantoate is bound at residue Gln-61. Gln-61 contributes to the beta-alanine binding site. 149-152 provides a ligand contact to ATP; that stretch reads GNKD. Position 155 (Gln-155) interacts with (R)-pantoate. ATP-binding positions include Ile-178 and 186–189; that span reads MSSR.

It belongs to the pantothenate synthetase family. In terms of assembly, homodimer.

The protein resides in the cytoplasm. The enzyme catalyses (R)-pantoate + beta-alanine + ATP = (R)-pantothenate + AMP + diphosphate + H(+). It functions in the pathway cofactor biosynthesis; (R)-pantothenate biosynthesis; (R)-pantothenate from (R)-pantoate and beta-alanine: step 1/1. Functionally, catalyzes the condensation of pantoate with beta-alanine in an ATP-dependent reaction via a pantoyl-adenylate intermediate. The polypeptide is Pantothenate synthetase (Shewanella oneidensis (strain ATCC 700550 / JCM 31522 / CIP 106686 / LMG 19005 / NCIMB 14063 / MR-1)).